A 233-amino-acid chain; its full sequence is Small ribosomal subunit protein uS2c (233 aa).

This sequence belongs to the universal ribosomal protein uS2 family.

Its subcellular location is the plastid. The protein localises to the chloroplast. In Staurastrum punctulatum (Green alga), this protein is Small ribosomal subunit protein uS2c (rps2).